Here is a 79-residue protein sequence, read N- to C-terminus: Neurotoxin 3FTx-LI (79 aa).

Residues methionine 1–threonine 21 form the signal peptide. 4 disulfides stabilise this stretch: cysteine 24–cysteine 43, cysteine 36–cysteine 61, cysteine 65–cysteine 71, and cysteine 72–cysteine 77.

Expressed by the venom gland.

It is found in the secreted. Blocks both the muscle-twitch response to nerve stimulation and the response to exogenous acetylcholine. The sequence is that of Neurotoxin 3FTx-LI from Bungarus fasciatus (Banded krait).